Reading from the N-terminus, the 904-residue chain is Protein argonaute 4A (904 aa).

2 disordered regions span residues 1–33 (MESN…KKLS) and 143–166 (KSSA…VRRP). The span at 11–21 (LPPPPPLPPNA) shows a compositional bias: pro residues. Low complexity predominate over residues 144–156 (SSANGGSPGNDSP). The region spanning 274-388 (PVVDFLLANQ…FPIELCSLVP (115 aa)) is the PAZ domain. Residues 557 to 865 (FLLCVLAERK…AAAQVSQFIK (309 aa)) enclose the Piwi domain. Positions 871–890 (ETSSSHGGHTSAGSAPVPEL) are disordered. The span at 872–885 (TSSSHGGHTSAGSA) shows a compositional bias: low complexity.

Belongs to the argonaute family. Ago subfamily.

Its function is as follows. Probably involved in the RNA silencing pathway. May bind to short RNAs such as microRNAs (miRNAs) or short interfering RNAs (siRNAs), and represses the translation of mRNAs which are complementary to them. This chain is Protein argonaute 4A (AGO4A), found in Oryza sativa subsp. japonica (Rice).